The sequence spans 430 residues: Enolase (430 aa).

Gln167 lines the (2R)-2-phosphoglycerate pocket. Glu209 (proton donor) is an active-site residue. Mg(2+) contacts are provided by Asp246, Glu289, and Asp316. Residues Lys341, Arg370, Ser371, and Lys392 each coordinate (2R)-2-phosphoglycerate. The active-site Proton acceptor is Lys341.

This sequence belongs to the enolase family. In terms of assembly, component of the RNA degradosome, a multiprotein complex involved in RNA processing and mRNA degradation. Requires Mg(2+) as cofactor.

The protein localises to the cytoplasm. Its subcellular location is the secreted. It localises to the cell surface. The catalysed reaction is (2R)-2-phosphoglycerate = phosphoenolpyruvate + H2O. It participates in carbohydrate degradation; glycolysis; pyruvate from D-glyceraldehyde 3-phosphate: step 4/5. Catalyzes the reversible conversion of 2-phosphoglycerate (2-PG) into phosphoenolpyruvate (PEP). It is essential for the degradation of carbohydrates via glycolysis. The protein is Enolase of Idiomarina loihiensis (strain ATCC BAA-735 / DSM 15497 / L2-TR).